The primary structure comprises 172 residues: L-methionine sulfoximine/L-methionine sulfone acetyltransferase (172 aa).

One can recognise an N-acetyltransferase domain in the interval 3–166 (ASIRDAGVAD…DLTFMQLNLD (164 aa)). Substrate contacts are provided by residues 75 to 77 (RPF) and 85 to 87 (EHS). Residues 88-90 (VYV), 96-101 (GKGLGV), and N127 each bind acetyl-CoA.

In terms of assembly, homodimer.

It catalyses the reaction L-methionine sulfoximine + acetyl-CoA = N-acetyl-L-methionine sulfoximine + CoA + H(+). The catalysed reaction is L-methionine sulfone + acetyl-CoA = N-acetyl-L-methionine sulfone + CoA + H(+). In terms of biological role, plays a role in the resistance against the toxic effects of L-methionine sulfoximine (MSX), a rare amino acid, which inhibits glutamine synthetase (GlnA). Catalyzes the acetylation of L-methionine sulfoximine (MSX). This chain is L-methionine sulfoximine/L-methionine sulfone acetyltransferase, found in Pseudomonas aeruginosa (strain ATCC 15692 / DSM 22644 / CIP 104116 / JCM 14847 / LMG 12228 / 1C / PRS 101 / PAO1).